Reading from the N-terminus, the 224-residue chain is Peptidyl-prolyl cis-trans isomerase CYP21-1 (224 aa).

The signal sequence occupies residues 1 to 27 (MRREISFLLQPRCLLLLVALTIFLVFA). Positions 50 to 214 (FLDVDIDGQR…KKVVIADSGE (165 aa)) constitute a PPIase cyclophilin-type domain. Residue N158 is glycosylated (N-linked (GlcNAc...) asparagine).

The protein belongs to the cyclophilin-type PPIase family. As to expression, ubiquitous.

The protein resides in the endoplasmic reticulum. The catalysed reaction is [protein]-peptidylproline (omega=180) = [protein]-peptidylproline (omega=0). PPIases accelerate the folding of proteins. It catalyzes the cis-trans isomerization of proline imidic peptide bonds in oligopeptides. This chain is Peptidyl-prolyl cis-trans isomerase CYP21-1 (CYP21-1), found in Arabidopsis thaliana (Mouse-ear cress).